Here is a 320-residue protein sequence, read N- to C-terminus: MKPSVILYKKVADDLRARLDQHFTVTELDAFPALDHPALATAEGIIGSGGKVDKDFLQHAPRLRAASTISVGYDTFNVDALNEKGVILMHTPTVLTETVADTVLALMLASARRVVEVVERVKAGEWKGGVGSDWFGTDVHHKTIGILGMGRIGLAVAQRAHFGFSMPVLYNARRHHAEAEERFNARHCDLDTLLAESDFLCITLPLTAETHHLIGREQLAKMKPSAILINIGRGAVVDEDALTEALVKGTIQAAGLDVFVKEPLPVDSPLLDLPNVVALPHIGSATHETRYDMAACAVDNLIAALSGQVKENCVNPQVLK.

Active-site residues include R233 and E262. The active-site Proton donor is H281.

It belongs to the D-isomer specific 2-hydroxyacid dehydrogenase family. GhrB subfamily. In terms of assembly, homodimer.

The protein localises to the cytoplasm. It carries out the reaction glycolate + NADP(+) = glyoxylate + NADPH + H(+). It catalyses the reaction (R)-glycerate + NAD(+) = 3-hydroxypyruvate + NADH + H(+). The enzyme catalyses (R)-glycerate + NADP(+) = 3-hydroxypyruvate + NADPH + H(+). Catalyzes the NADPH-dependent reduction of glyoxylate and hydroxypyruvate into glycolate and glycerate, respectively. This is Glyoxylate/hydroxypyruvate reductase B from Pectobacterium atrosepticum (strain SCRI 1043 / ATCC BAA-672) (Erwinia carotovora subsp. atroseptica).